The chain runs to 340 residues: GTPase Obg (340 aa).

One can recognise an Obg domain in the interval 1–159; that stretch reads MKFLDQAKVY…RTLWLRLKLI (159 aa). The OBG-type G domain occupies 160-327; the sequence is ADAGIIGLPN…LLRAGAHIIE (168 aa). Residues 166-173, 191-195, 212-215, 279-282, and 308-310 contribute to the GTP site; these read GLPNAGKS, FTTLY, DIPG, SQID, and SAV. Mg(2+) contacts are provided by serine 173 and threonine 193.

Belongs to the TRAFAC class OBG-HflX-like GTPase superfamily. OBG GTPase family. As to quaternary structure, monomer. Mg(2+) is required as a cofactor.

It localises to the cytoplasm. Its function is as follows. An essential GTPase which binds GTP, GDP and possibly (p)ppGpp with moderate affinity, with high nucleotide exchange rates and a fairly low GTP hydrolysis rate. Plays a role in control of the cell cycle, stress response, ribosome biogenesis and in those bacteria that undergo differentiation, in morphogenesis control. This Bartonella henselae (strain ATCC 49882 / DSM 28221 / CCUG 30454 / Houston 1) (Rochalimaea henselae) protein is GTPase Obg.